Reading from the N-terminus, the 216-residue chain is tRNA (guanine-N(7)-)-methyltransferase (216 aa).

S-adenosyl-L-methionine-binding residues include glutamate 44, glutamate 69, asparagine 96, and aspartate 118. Residue aspartate 118 is part of the active site. Substrate is bound at residue lysine 122. The tract at residues 124–129 is interaction with RNA; that stretch reads RHEKRR. Residues aspartate 154 and 191–194 contribute to the substrate site; that span reads TEYE.

The protein belongs to the class I-like SAM-binding methyltransferase superfamily. TrmB family.

The enzyme catalyses guanosine(46) in tRNA + S-adenosyl-L-methionine = N(7)-methylguanosine(46) in tRNA + S-adenosyl-L-homocysteine. It functions in the pathway tRNA modification; N(7)-methylguanine-tRNA biosynthesis. Functionally, catalyzes the formation of N(7)-methylguanine at position 46 (m7G46) in tRNA. The chain is tRNA (guanine-N(7)-)-methyltransferase from Geobacillus thermodenitrificans (strain NG80-2).